We begin with the raw amino-acid sequence, 957 residues long: Bifunctional glutamine synthetase adenylyltransferase/adenylyl-removing enzyme (957 aa).

The segment at 1-447 (MFSQLDFTGL…IFNQLIGEEE (447 aa)) is adenylyl removase. The segment at 454–957 (VNEQLAIWQD…IWQQIFTDNE (504 aa)) is adenylyl transferase.

This sequence belongs to the GlnE family. The cofactor is Mg(2+).

It carries out the reaction [glutamine synthetase]-O(4)-(5'-adenylyl)-L-tyrosine + phosphate = [glutamine synthetase]-L-tyrosine + ADP. It catalyses the reaction [glutamine synthetase]-L-tyrosine + ATP = [glutamine synthetase]-O(4)-(5'-adenylyl)-L-tyrosine + diphosphate. Functionally, involved in the regulation of glutamine synthetase GlnA, a key enzyme in the process to assimilate ammonia. When cellular nitrogen levels are high, the C-terminal adenylyl transferase (AT) inactivates GlnA by covalent transfer of an adenylyl group from ATP to specific tyrosine residue of GlnA, thus reducing its activity. Conversely, when nitrogen levels are low, the N-terminal adenylyl removase (AR) activates GlnA by removing the adenylyl group by phosphorolysis, increasing its activity. The regulatory region of GlnE binds the signal transduction protein PII (GlnB) which indicates the nitrogen status of the cell. In Haemophilus ducreyi (strain 35000HP / ATCC 700724), this protein is Bifunctional glutamine synthetase adenylyltransferase/adenylyl-removing enzyme.